A 988-amino-acid polypeptide reads, in one-letter code: Chloride channel protein 1 (988 aa).

The Cytoplasmic portion of the chain corresponds to 1-118 (MEQSRSQQRG…VVRRKLGEDG (118 aa)). Residues 65–75 (HKEQFSDREQD) are compositionally biased toward basic and acidic residues. The tract at residues 65 to 92 (HKEQFSDREQDIGMPKKTGSSSTVDSKD) is disordered. The chain crosses the membrane as a helical span at residues 119-150 (IFLVLLGLLMALVSWSMDYVSAKSLQAYKWSY). The Extracellular portion of the chain corresponds to 151-158 (AQMQPSLP). The helical transmembrane segment at 159–179 (LQFLVWVTFPLVLILFSALFC) threads the bilayer. Over 180 to 183 (HLIS) the chain is Cytoplasmic. The note=Loop between two helices intramembrane region spans 184–189 (PQAVGS). The Selectivity filter part_1 motif lies at 188–192 (GSGIP). Chloride is bound at residue Ser189. Residues 190-195 (GIPEMK) constitute an intramembrane region (helical). Topologically, residues 196–208 (TILRGVVLKEYLT) are cytoplasmic. The segment at residues 209-224 (MKAFVAKVVALTAGLG) is an intramembrane region (helical). The segment at residues 225 to 230 (SGIPVG) is an intramembrane region (note=Loop between two helices). Residues 230–234 (GKEGP) carry the Selectivity filter part_2 motif. The segment at residues 231–246 (KEGPFVHIASICAAVL) is an intramembrane region (helical). Over 247 to 268 (SKFMSVFCGVYEQPYYYSDILT) the chain is Cytoplasmic. 2 consecutive intramembrane regions (helical) follow at residues 269–280 (VGCAVGVGCCFG) and 281–290 (TPLGGVLFSI). Topologically, residues 291–301 (EVTSTYFAVRN) are cytoplasmic. A helical transmembrane segment spans residues 302–321 (YWRGFFAATFSAFVFRVLAV). Residues 322-347 (WNKDAVTITALFRTNFRMDFPFDLKE) lie on the Extracellular side of the membrane. The helical transmembrane segment at 348 to 376 (LPAFAAIGICCGLLGAVFVYLHRQVMLGV) threads the bilayer. Over 377 to 390 (RKHKALSQFLAKHR) the chain is Cytoplasmic. A helical membrane pass occupies residues 391 to 408 (LLYPGIVTFVIASFTFPP). The Extracellular portion of the chain corresponds to 409-414 (GMGQFM). Positions 415-418 (AGEL) form an intramembrane region, note=Loop between two helices. Positions 419–426 (MPREAIST) form an intramembrane region, helical. Over 427–457 (LFDNNTWVKHAGDPESLGQSAVWIHPRVNVV) the chain is Extracellular. An intramembrane region (helical) is located at residues 458 to 475 (IIIFLFFVMKFWMSIVAT). Positions 476 to 482 (TMPIPCG) form an intramembrane region, note=Loop between two helices. The short motif at 482–486 (GGFMP) is the Selectivity filter part_3 element. Residues 483–498 (GFMPVFVLGAAFGRLV) constitute an intramembrane region (helical). Position 484 (Phe484) interacts with chloride. At 499-521 (GEIMAMLFPDGILFDDIIYKILP) the chain is on the extracellular side. An intramembrane region (helical) is located at residues 522–538 (GGYAVIGAAALTGAVSH). The note=Loop between two helices intramembrane region spans 539–540 (TV). Residues 541–554 (STAVICFELTGQIA) constitute an intramembrane region (helical). Residues 555–557 (HIL) lie on the Extracellular side of the membrane. An intramembrane region (helical) is located at residues 558-571 (PMMVAVILANMVAQ). Residues 572 to 575 (SLQP) constitute an intramembrane region (note=Loop between two helices). The helical intramembrane region spans 576–578 (SLY). Tyr578 lines the chloride pocket. The Cytoplasmic portion of the chain corresponds to 579 to 988 (DSIIQVKKLP…DEEDEDELIL (410 aa)). A CBS 1 domain is found at 609–668 (MVRDVKFVSASYTYGELRTLLQTTTVKTLPLVDSKDSMILLGSVERSELQALLQRHLCPE). Positions 713 to 764 (EDEDEDLSGKSELPPSLALHPSTTAPLSPEEPNGPLPGHKQQPEAPEPAGQR) are disordered. Residues 821–876 (IDQSPFQLVEQTTLHKTHTLFSLLGLHLAYVTSMGKLRGVLALEELQKAIEGHTKS) form the CBS 2 domain. Residues 880–988 (LRPPLASFRN…DEEDEDELIL (109 aa)) form a disordered region. Position 886 is a phosphoserine (Ser886). The span at 887–906 (FRNTTSTRKSTGAPPSSAEN) shows a compositional bias: polar residues. Positions 929 to 941 (TPVPSPSPEPPLS) are enriched in pro residues. Composition is skewed to acidic residues over residues 950–967 (ELEELELVESPGLEEELA) and 979–988 (DEEDEDELIL).

The protein belongs to the chloride channel (TC 2.A.49) family. ClC-1/CLCN1 subfamily. Homodimer. In terms of tissue distribution, predominantly expressed in skeletal muscles.

Its subcellular location is the cell membrane. The protein localises to the sarcolemma. The protein resides in the T-tubule. It catalyses the reaction chloride(in) = chloride(out). The catalysed reaction is thiocyanate(in) = thiocyanate(out). The enzyme catalyses bromide(in) = bromide(out). It carries out the reaction nitrate(in) = nitrate(out). It catalyses the reaction iodide(out) = iodide(in). Modulated by membrane voltage with depolarization favouring channel opening and hyperpolarization favouring channel closure. Inhibited by acidic pH and ATP binding due to a shift of voltage dependence of common gating to more positive voltages. Inhibited by 9-anthracene-carboxylic. Functionally, voltage-gated chloride channel involved in skeletal muscle excitability. Generates most of the plasma membrane chloride conductance in skeletal muscle fibers, stabilizes the resting membrane potential and contributes to the repolarization phase during action potential firing. Forms a homodimeric channel where each subunit has its own ion conduction pathway. Conducts double-barreled currents controlled by two types of gates, two fast glutamate gates that control each subunit independently and a slow common gate that opens and shuts off both subunits simultaneously. Has a significant open probability at muscle resting potential and is further activated upon membrane depolarization. Permeable to small monovalent anions with ion selectivity for chloride &gt; thiocyanate &gt; bromide &gt; nitrate &gt; iodide. This chain is Chloride channel protein 1, found in Homo sapiens (Human).